A 468-amino-acid chain; its full sequence is uncharacterized protein (468 aa).

12 consecutive transmembrane segments (helical) span residues 13-33 (LEAFSPIIVMLLLLGLGYALF), 40-60 (LMIISTVFAGFLVFKLGHCYL), 76-96 (ALLILITVGLLIGTWISGGTI), 112-132 (LYVTALFLTAIVSICTGTSWG), 141-161 (FMGVAIGLDANLAATAGAVVA), 194-214 (LLYTTLPSFILSATVYVVYGL), 237-257 (VYHFNFLLLIPVAIVLWGSIT), 260-280 (PTIPVMLLSAFIAIINAILIQ), 328-348 (CFCALSFAGVLQLSGALTVII), 354-374 (FVHSTLSLIITTILCGLTMIG), 414-434 (IIEPILPWTAAGAYMAGTLGV), and 443-463 (AILCWSGIIFAIIYGASGIGI).

The protein belongs to the NhaC Na(+)/H(+) (TC 2.A.35) antiporter family.

It is found in the cell membrane. This is an uncharacterized protein from Haemophilus influenzae (strain ATCC 51907 / DSM 11121 / KW20 / Rd).